Consider the following 325-residue polypeptide: Iodotyrosine dehalogenase 1 homolog (325 aa).

A helical transmembrane segment spans residues 42–62; sequence VLNVLFTLGVILFVIYQVASL. Residues 63 to 325 are Cytoplasmic-facing; the sequence is LHRMNKRVEK…KPVEHITKLY (263 aa). Residues 135 to 139, 163 to 164, 273 to 275, and arginine 315 contribute to the FMN site; these read RRSCR, SV, and VTS.

It belongs to the nitroreductase family. FMN serves as cofactor. As to expression, expressed in body-wall, anal depressor and vulval muscles.

It localises to the membrane. May contribute to coordination of muscle contraction as regulatory subunit of the nonessential sup-9 potassium channel complex. May act downstream of sup-10. In Caenorhabditis elegans, this protein is Iodotyrosine dehalogenase 1 homolog.